Here is a 393-residue protein sequence, read N- to C-terminus: MNGRTREYLKGRFGDHYRRASLSPPPAANEREWGYITWGDGGTTMVRHHSYLDVTGGGDLGGFLAGERPRHVYFSAGRYDDPGASSMGQKGWRGSDLVFDLDADHLPGIDPSETSYAAMLEACKGALSRLLDLLVEDFGFEPLAVVFSGGRGYHVHVRRDDVLELDRTARREIVEYVLGEGLDFDDIVSTQAVAGSAGRSSPAQKRTLPDGGWAGRVRTRLTTLFDEVLTMEEAAALDRLREFDGIGEGKAKAALTAARNNREELTKGNVDVHPAVYSIARELFETVVEAESAPIDEPVTTDINRLIRLPGSLHGGTGLEVQHLDRDAIDAFDPLSDAVPETFVGNEIAIYTQEPTTVELRGESFRLSEGVSSVPEYVGVFAMARGYASKAGE.

Residues D100, D102, and D296 contribute to the active site.

It belongs to the eukaryotic-type primase small subunit family. Heterodimer of a small subunit (PriS) and a large subunit (PriL). It depends on Mg(2+) as a cofactor. Requires Mn(2+) as cofactor.

In terms of biological role, catalytic subunit of DNA primase, an RNA polymerase that catalyzes the synthesis of short RNA molecules used as primers for DNA polymerase during DNA replication. The small subunit contains the primase catalytic core and has DNA synthesis activity on its own. Binding to the large subunit stabilizes and modulates the activity, increasing the rate of DNA synthesis while decreasing the length of the DNA fragments, and conferring RNA synthesis capability. The DNA polymerase activity may enable DNA primase to also catalyze primer extension after primer synthesis. May also play a role in DNA repair. The chain is DNA primase small subunit PriS from Natronomonas pharaonis (strain ATCC 35678 / DSM 2160 / CIP 103997 / JCM 8858 / NBRC 14720 / NCIMB 2260 / Gabara) (Halobacterium pharaonis).